A 111-amino-acid chain; its full sequence is Disintegrin CV-11-alpha (111 aa).

An N-terminal signal peptide occupies residues 1–20; the sequence is MIQVLLVIICLAVFPYQGSS. Residues 21-46 constitute a propeptide that is removed on maturation; sequence IILESGNVNDFELVYPKKVTVLPTGA. Residues 47–111 enclose the Disintegrin domain; that stretch reads MNSAHPCCDP…SDCPRNPWKD (65 aa). Cystine bridges form between cysteine 53–cysteine 76, cysteine 67–cysteine 73, cysteine 72–cysteine 97, and cysteine 85–cysteine 104. The Cell attachment site motif lies at 89–91; the sequence is KGD.

Belongs to the disintegrin family. Dimeric disintegrin subfamily. As to quaternary structure, heterodimer with subunit beta; disulfide-linked. Expressed by the venom gland.

Its subcellular location is the secreted. Inhibits ADP-induced human platelet aggregation. Antagonist of alpha-IIb/beta-3 (ITGA2B/ITGB3). In Cerastes vipera (Sahara sand viper), this protein is Disintegrin CV-11-alpha.